Consider the following 425-residue polypeptide: Enolase (425 aa).

Residue Gln-163 coordinates (2R)-2-phosphoglycerate. Glu-205 (proton donor) is an active-site residue. Mg(2+)-binding residues include Asp-242, Glu-285, and Asp-312. Residues Lys-337, Arg-366, Ser-367, and Lys-388 each coordinate (2R)-2-phosphoglycerate. The active-site Proton acceptor is the Lys-337.

Belongs to the enolase family. Mg(2+) serves as cofactor.

The protein resides in the cytoplasm. Its subcellular location is the secreted. The protein localises to the cell surface. It carries out the reaction (2R)-2-phosphoglycerate = phosphoenolpyruvate + H2O. It functions in the pathway carbohydrate degradation; glycolysis; pyruvate from D-glyceraldehyde 3-phosphate: step 4/5. Functionally, catalyzes the reversible conversion of 2-phosphoglycerate (2-PG) into phosphoenolpyruvate (PEP). It is essential for the degradation of carbohydrates via glycolysis. The chain is Enolase from Syntrophomonas wolfei subsp. wolfei (strain DSM 2245B / Goettingen).